Here is a 428-residue protein sequence, read N- to C-terminus: Adenylosuccinate synthetase (428 aa).

GTP is bound by residues 13–19 (GDEGKGK) and 41–43 (GHT). D14 serves as the catalytic Proton acceptor. Mg(2+)-binding residues include D14 and G41. IMP is bound by residues 14-17 (DEGK), 39-42 (NAGH), T130, R144, Q223, T238, and R302. Catalysis depends on H42, which acts as the Proton donor. Position 298–304 (298–304 (ASTGRRR)) interacts with substrate. Residues R304, 330–332 (KLD), and 412–414 (STG) each bind GTP.

Belongs to the adenylosuccinate synthetase family. As to quaternary structure, homodimer. Requires Mg(2+) as cofactor.

Its subcellular location is the cytoplasm. The catalysed reaction is IMP + L-aspartate + GTP = N(6)-(1,2-dicarboxyethyl)-AMP + GDP + phosphate + 2 H(+). It participates in purine metabolism; AMP biosynthesis via de novo pathway; AMP from IMP: step 1/2. Plays an important role in the de novo pathway of purine nucleotide biosynthesis. Catalyzes the first committed step in the biosynthesis of AMP from IMP. The chain is Adenylosuccinate synthetase from Dichelobacter nodosus (strain VCS1703A).